The following is a 552-amino-acid chain: Hyaluronan synthase 2 (552 aa).

Residues 1-11 (MYCERFICILR) lie on the Cytoplasmic side of the membrane. Residues 12-32 (ILGTTLFGVSLLLGITAAYIV) traverse the membrane as a helical segment. Topologically, residues 33-45 (GYQFIQTDNYYFS) are extracellular. The chain crosses the membrane as a helical span at residues 46–66 (FGLYGAILASHLIIQSLFAYL). Residues 67-374 (EHRKMKRSLE…NAMWFHKHHL (308 aa)) are Cytoplasmic-facing. A helical transmembrane segment spans residues 375–395 (WMTYEAVITGFFPFFLIATVI). The Extracellular portion of the chain corresponds to 396–402 (QLFYRGK). A helical membrane pass occupies residues 403–423 (IWNILLFLLTVQLVGLIKSSF). Residues 424–429 (ASFLRG) are Cytoplasmic-facing. A helical transmembrane segment spans residues 430–450 (NIVMVFMSLYSVLYMSSLLPA). At 451-475 (KMFAIATINKAGWGTSGRKTIVVNF) the chain is on the extracellular side. The helical transmembrane segment at 476–496 (IGLIPVSIWFTILLGRVIFTI) threads the bilayer. Residues 497–510 (YKESKKPFSESKTT) are Cytoplasmic-facing. A helical transmembrane segment spans residues 511-531 (VLVIGTILYACYWVLLLTLYL). Over 532–552 (VLITKCGRRKKEQHYDMVLDV) the chain is Extracellular.

The protein belongs to the NodC/HAS family. As to quaternary structure, homodimer; dimerization promotes enzymatic activity. The cofactor is Mg(2+).

It is found in the cell membrane. The protein resides in the endoplasmic reticulum membrane. The protein localises to the vesicle. It localises to the golgi apparatus membrane. Its subcellular location is the lysosome. It carries out the reaction [hyaluronan](n) + UDP-N-acetyl-alpha-D-glucosamine = N-acetyl-beta-D-glucosaminyl-(1-&gt;4)-[hyaluronan](n) + UDP + H(+). The catalysed reaction is N-acetyl-beta-D-glucosaminyl-(1-&gt;4)-[hyaluronan](n) + UDP-alpha-D-glucuronate = [hyaluronan](n+1) + UDP + H(+). It functions in the pathway glycan biosynthesis; hyaluronan biosynthesis. In terms of biological role, catalyzes the addition of GlcNAc or GlcUA monosaccharides to the nascent hyaluronan polymer. Therefore, it is essential to hyaluronan synthesis a major component of most extracellular matrices that has a structural role in tissues architectures and regulates cell adhesion, migration and differentiation. This is one of three isoenzymes responsible for cellular hyaluronan synthesis and it is particularly responsible for the synthesis of high molecular mass hyaluronan. The sequence is that of Hyaluronan synthase 2 (HAS2) from Gallus gallus (Chicken).